The chain runs to 341 residues: Probable sulfurtransferase (341 aa).

4 residues coordinate Zn(2+): Cys40, Cys42, Cys58, and Cys61. Gly88 serves as a coordination point for ATP. The [4Fe-4S] cluster site is built by Cys176 and Cys179. Residues Arg183 and Gly202 each coordinate ATP. A [4Fe-4S] cluster-binding site is contributed by Cys267. Residues Cys316, Cys319, Cys328, and Cys331 each coordinate Zn(2+).

The protein belongs to the TtcA family. It depends on [4Fe-4S] cluster as a cofactor. Mg(2+) serves as cofactor.

The polypeptide is Probable sulfurtransferase (Methanocaldococcus jannaschii (strain ATCC 43067 / DSM 2661 / JAL-1 / JCM 10045 / NBRC 100440) (Methanococcus jannaschii)).